Here is a 1495-residue protein sequence, read N- to C-terminus: Ras GTPase-activating-like protein IQG1 (1495 aa).

The Calponin-homology (CH) domain occupies 108–221; the sequence is LCRVSEVKIW…ILISMINKKW (114 aa). Thr-264 is subject to Phosphothreonine. At Ser-268 the chain carries Phosphoserine. Residue Thr-299 is modified to Phosphothreonine. IQ domains are found at residues 447 to 467, 538 to 567, 568 to 597, 599 to 628, 629 to 658, 687 to 716, and 717 to 746; these read EQDILRFQACLRGNKFRVLSS, SHYPLTKLQSYMRASYVRKKVMSLNTKLND, ERESIMKFSAIIRGNVVRCSEDAILSAVHD, HKENISKLQSLIRGIFTRSCLASIIYSLGK, ENCNIIQLSACIRGNAVRHKVQSLFAPENN, EYNNLALFQAFSRGALVRESLDQKSSFYKR, and NVRSVIMIQSWIRKSLQRSAYLELLDCPNP. Positions 759-798 form a coiled coil; it reads NGTATIEEVQNQLESCQASLDSENMKKERLLKSIRQQLNI. The 225-residue stretch at 876-1100 folds into the Ras-GAP domain; it reads SYFTRFVCEM…PHIKDVLYNV (225 aa).

As to quaternary structure, interacts with AFR1. Interacts with AKR1. Interacts with activated CDC42. Interacts with calmodulin CMD1. Interacts with myosin MYO1 and its light chain MLC1. Interacts with BUD4. Interacts with INN1. Interacts with SEC3. Interacts with TEM1.

Its subcellular location is the bud neck. In terms of biological role, required for the assembly and the contraction of the actomyosin ring at the bud neck during cytokinesis. Seems to be involved in additional tasks during cell division like axial bud-site selection and targeted secretion by recruiting the spatial landmark BUD4, the septin CDC12 and the secretion landmark SEC3 to the bud neck. May be regulated by calcium ions. The polypeptide is Ras GTPase-activating-like protein IQG1 (IQG1) (Saccharomyces cerevisiae (strain ATCC 204508 / S288c) (Baker's yeast)).